Here is a 184-residue protein sequence, read N- to C-terminus: Photosystem I assembly protein Ycf4 (184 aa).

2 helical membrane-spanning segments follow: residues 21-43 (NFCW…ISSY) and 58-80 (LFFP…SSYL).

This sequence belongs to the Ycf4 family.

The protein resides in the plastid. Its subcellular location is the chloroplast thylakoid membrane. Seems to be required for the assembly of the photosystem I complex. The protein is Photosystem I assembly protein Ycf4 of Carpobrotus chilensis (Sea fig).